Reading from the N-terminus, the 441-residue chain is Trigger factor (441 aa).

The PPIase FKBP-type domain occupies 161–246; it reads GDQVTIDFVG…VSEVAEQILP (86 aa).

Belongs to the FKBP-type PPIase family. Tig subfamily.

The protein resides in the cytoplasm. The enzyme catalyses [protein]-peptidylproline (omega=180) = [protein]-peptidylproline (omega=0). Functionally, involved in protein export. Acts as a chaperone by maintaining the newly synthesized protein in an open conformation. Functions as a peptidyl-prolyl cis-trans isomerase. The protein is Trigger factor of Marinomonas sp. (strain MWYL1).